A 622-amino-acid chain; its full sequence is Chaperone protein HscA homolog (622 aa).

This sequence belongs to the heat shock protein 70 family.

Functionally, chaperone involved in the maturation of iron-sulfur cluster-containing proteins. Has a low intrinsic ATPase activity which is markedly stimulated by HscB. The sequence is that of Chaperone protein HscA homolog from Acidovorax ebreus (strain TPSY) (Diaphorobacter sp. (strain TPSY)).